Consider the following 120-residue polypeptide: Large ribosomal subunit protein bL19 (120 aa).

The protein belongs to the bacterial ribosomal protein bL19 family.

Its function is as follows. This protein is located at the 30S-50S ribosomal subunit interface and may play a role in the structure and function of the aminoacyl-tRNA binding site. The chain is Large ribosomal subunit protein bL19 from Renibacterium salmoninarum (strain ATCC 33209 / DSM 20767 / JCM 11484 / NBRC 15589 / NCIMB 2235).